Here is a 171-residue protein sequence, read N- to C-terminus: Lipoprotein signal peptidase (171 aa).

4 consecutive transmembrane segments (helical) span residues Trp15 to Asp35, Val47 to Ser67, Trp72 to Met92, and Ala107 to Val127. Active-site residues include Asp128 and Asp146. A helical transmembrane segment spans residues Ala141–Phe161.

Belongs to the peptidase A8 family.

It localises to the cell inner membrane. It catalyses the reaction Release of signal peptides from bacterial membrane prolipoproteins. Hydrolyzes -Xaa-Yaa-Zaa-|-(S,diacylglyceryl)Cys-, in which Xaa is hydrophobic (preferably Leu), and Yaa (Ala or Ser) and Zaa (Gly or Ala) have small, neutral side chains.. It functions in the pathway protein modification; lipoprotein biosynthesis (signal peptide cleavage). Functionally, this protein specifically catalyzes the removal of signal peptides from prolipoproteins. The chain is Lipoprotein signal peptidase from Vibrio cholerae serotype O1 (strain ATCC 39315 / El Tor Inaba N16961).